We begin with the raw amino-acid sequence, 210 residues long: Nta operon transcriptional regulator (210 aa).

Residues 1–55 (MAVSYHFRPGERINEVELAAQLKVSRTPLREALNRLTTEGFLTTTANKGFFARVL) enclose the HTH gntR-type domain. The segment at residues 15 to 34 (EVELAAQLKVSRTPLREALN) is a DNA-binding region (H-T-H motif).

Its function is as follows. Probable regulator for the expression of the NTA monooxygenase subunits. This Aminobacter aminovorans (Chelatobacter heintzii) protein is Nta operon transcriptional regulator (ntaR).